Consider the following 1082-residue polypeptide: MEPAGLEQILKELLLPDTERIRRATEQLQTILRDPAALPALFDLLATATDSQIRQFAAVLTRRRLNNRWRRLAPEQRESLKSLVLTALQKETVHSVSVSLAQLSATIFRKEGLQGWPQFMNLLQHSTHSSHSPEKEVGLLLLSVVVSSQPEAFHAHQHELLQLLNETLSDVSFPGVLFYSLRTLTAIARYVRPDDVSLARMLVPKVVTALRTLIPLDEVKACEALEALDEMLETELPIINPHLSEVLTFCLEVAKNVALGEPLRVRVLCCLTFLVKVKSKALLKNRLVPPLLHALFPLMAAEPPMGQLDPEDQDSDDDDLEIGLMGETPKHFAVQVVDMLALHLPPEKLCPHVMPMLEEALRSEDPYQRKAGFLVLAVLSDGAGDHIRQRLLYPLLQIVCKGLDDPSQIVRNAALFALGQFSENLQPHISSYSEEVMPLLLSYLKSVPMGNTHHLAKACYALENFVENLGPKVQPYLPELMECMLQPLKNPSKARTKELAVSAIGAIATAAQDSLLPYFPTIMDLLREFLLTGHEDFHLVQIQSLETLGVLARALGESMKPLAEECCQLGLGLCIHIDDPDVRRCTYSLFAALSGLMGEGLGPYLPQITTLMLLSLRSTEGIVPQYDGISSFLLFDDDSEAEEEEELMDEDMEEEGDDSEISGYSVENAFFDEKEDTCTALGEISMNTCVAFLPFMDATFDEVYKLLECPHMNVRKSAYEALGQFCCALHKASQRSSSDPSSSPVLQTSLARVMPAYMQAVKVERERPVVMAVLESLTGVLRTCGSLALQPPGRLSELCNVLKAVLQKKTACQDAEEDDDEDDDQAEYDAMLLEHAGEAIPVLAATAGGHAFAPFFATFLPLLLCKTKQSCTVAEKSFAVGTLAESIQGLGTASAQFVSRLFPVLLNNAREADPEVRSNAIFGLGVLAEHGGCPAQDHFPKLLGLLLPLLARERHDRVRDNICGALARVLMASPVGKTEPQVLATLLRALPLKEDMEEWLTIGHLFSFLHQNNPEQVVDVASELLRICSLILPDNRIPPDTKAALLLLLTFLAKQHTDSFHTALGSLPNDKAQELQAMMGLT.

Methionine 1 carries the post-translational modification N-acetylmethionine. Residues 24 to 90 (ATEQLQTILR…KSLVLTALQK (67 aa)) enclose the Importin N-terminal domain. 6 HEAT repeats span residues 348–385 (KLCP…GAGD), 390–427 (RLLY…NLQP), 431–471 (SYSE…NLGP), 475–513 (PYLP…AAQD), 896–933 (QFVS…HGGC), and 937–975 (DHFP…ASPV).

This sequence belongs to the importin beta family. In terms of assembly, found in a cytosolic complex with ASF1 (ASF1A or ASF1B) and histones H3 and H4.

It localises to the cytoplasm. The protein localises to the nucleus. Its function is as follows. Nuclear transport receptor that mediates nuclear import of proteins, such as histones, RPS3A, TNP2 and VDR. Serves as receptor for nuclear localization signals (NLS) in cargo substrates. Is thought to mediate docking of the importin/substrate complex to the nuclear pore complex (NPC) through binding to nucleoporin and the complex is subsequently translocated through the pore by an energy requiring, Ran-dependent mechanism. At the nucleoplasmic side of the NPC, Ran binds to the importin, the importin/substrate complex dissociates and importin is re-exported from the nucleus to the cytoplasm where GTP hydrolysis releases Ran. The directionality of nuclear import is thought to be conferred by an asymmetric distribution of the GTP- and GDP-bound forms of Ran between the cytoplasm and nucleus. Mediates the nuclear import of the histone H3-H4 dimer when in complex with ASF1 (ASF1A or ASF1B). Mediates the ligand-independent nuclear import of vitamin D receptor (VDR). The chain is Importin-4 (Ipo4) from Mus musculus (Mouse).